We begin with the raw amino-acid sequence, 362 residues long: 2-aminoethylphosphonate--pyruvate transaminase (362 aa).

K193 bears the N6-(pyridoxal phosphate)lysine mark.

It belongs to the class-V pyridoxal-phosphate-dependent aminotransferase family. PhnW subfamily. As to quaternary structure, homodimer. The cofactor is pyridoxal 5'-phosphate.

The catalysed reaction is (2-aminoethyl)phosphonate + pyruvate = phosphonoacetaldehyde + L-alanine. Functionally, involved in phosphonate degradation. The polypeptide is 2-aminoethylphosphonate--pyruvate transaminase (Phocaeicola vulgatus (strain ATCC 8482 / DSM 1447 / JCM 5826 / CCUG 4940 / NBRC 14291 / NCTC 11154) (Bacteroides vulgatus)).